The following is a 23-amino-acid chain: Endochitinase B (23 aa).

It belongs to the glycosyl hydrolase 19 family. Chitinase class I subfamily.

It catalyses the reaction Random endo-hydrolysis of N-acetyl-beta-D-glucosaminide (1-&gt;4)-beta-linkages in chitin and chitodextrins.. Defense against chitin-containing fungal pathogens. The polypeptide is Endochitinase B (Pisum sativum (Garden pea)).